Reading from the N-terminus, the 500-residue chain is Carnosic acid synthase (500 aa).

A helical transmembrane segment spans residues 4–24 (LILLSLAFLASCVVAYSRRRP). Heme is bound at residue Cys-443.

This sequence belongs to the cytochrome P450 family. The cofactor is heme. In terms of tissue distribution, expressed in leaf glandular trichomes.

The protein localises to the membrane. It catalyses the reaction 11-hydroxyferruginol + 3 reduced [NADPH--hemoprotein reductase] + 3 O2 = carnosate + 3 oxidized [NADPH--hemoprotein reductase] + 4 H2O + 4 H(+). The catalysed reaction is miltiradiene + 2 reduced [NADPH--hemoprotein reductase] + 2 O2 = miltiradien-20-al + 2 oxidized [NADPH--hemoprotein reductase] + 3 H2O + 2 H(+). It carries out the reaction ferruginol + 3 reduced [NADPH--hemoprotein reductase] + 3 O2 = pisiferate + 3 oxidized [NADPH--hemoprotein reductase] + 4 H2O + 4 H(+). It functions in the pathway secondary metabolite biosynthesis; terpenoid biosynthesis. In terms of biological role, monooxygenase involved in the biosynthesis of carnosate, a potent antioxidant labdane-related diterpene natural product. Catalyzes the oxidation of 11-hydroxyferruginol to produce carnosate. Mediates the conversion of miltiradien into miltiradien-20-al. Also involved in the production of pisiferic acid and derivative products from ferruginol. The protein is Carnosic acid synthase of Salvia pomifera (Apple sage).